A 148-amino-acid chain; its full sequence is MF7 protein (148 aa).

This is MF7 protein from Myxoma virus (strain Lausanne) (MYXV).